The chain runs to 417 residues: Serine hydroxymethyltransferase (417 aa).

At lysine 54 the chain carries N6-acetyllysine. (6S)-5,6,7,8-tetrahydrofolate is bound by residues leucine 121 and 125-127 (GHL). The residue at position 229 (lysine 229) is an N6-(pyridoxal phosphate)lysine. Lysine 250, lysine 285, and lysine 354 each carry N6-acetyllysine. 355–357 (SPF) is a binding site for (6S)-5,6,7,8-tetrahydrofolate. Lysine 375 carries the post-translational modification N6-acetyllysine.

This sequence belongs to the SHMT family. In terms of assembly, homodimer. Pyridoxal 5'-phosphate is required as a cofactor.

It localises to the cytoplasm. The enzyme catalyses (6R)-5,10-methylene-5,6,7,8-tetrahydrofolate + glycine + H2O = (6S)-5,6,7,8-tetrahydrofolate + L-serine. It participates in one-carbon metabolism; tetrahydrofolate interconversion. It functions in the pathway amino-acid biosynthesis; glycine biosynthesis; glycine from L-serine: step 1/1. Its function is as follows. Catalyzes the reversible interconversion of serine and glycine with tetrahydrofolate (THF) serving as the one-carbon carrier. This reaction serves as the major source of one-carbon groups required for the biosynthesis of purines, thymidylate, methionine, and other important biomolecules. Also exhibits THF-independent aldolase activity toward beta-hydroxyamino acids, producing glycine and aldehydes, via a retro-aldol mechanism. The chain is Serine hydroxymethyltransferase from Escherichia coli O17:K52:H18 (strain UMN026 / ExPEC).